We begin with the raw amino-acid sequence, 202 residues long: Dephospho-CoA kinase (202 aa).

The 199-residue stretch at 4–202 (VIGLTGGIAT…TDKGFINKER (199 aa)) folds into the DPCK domain. 12-17 (ATGKST) contributes to the ATP binding site.

Belongs to the CoaE family.

Its subcellular location is the cytoplasm. The enzyme catalyses 3'-dephospho-CoA + ATP = ADP + CoA + H(+). It participates in cofactor biosynthesis; coenzyme A biosynthesis; CoA from (R)-pantothenate: step 5/5. Functionally, catalyzes the phosphorylation of the 3'-hydroxyl group of dephosphocoenzyme A to form coenzyme A. This Staphylococcus haemolyticus (strain JCSC1435) protein is Dephospho-CoA kinase.